A 142-amino-acid polypeptide reads, in one-letter code: Hydrogenase maturation factor HypA (142 aa).

Residue His2 coordinates Ni(2+). Residues Cys73, Cys76, Cys109, and Cys112 each contribute to the Zn(2+) site.

Belongs to the HypA/HybF family.

Involved in the maturation of [NiFe] hydrogenases. Required for nickel insertion into the metal center of the hydrogenase. This Methanopyrus kandleri (strain AV19 / DSM 6324 / JCM 9639 / NBRC 100938) protein is Hydrogenase maturation factor HypA.